We begin with the raw amino-acid sequence, 357 residues long: NmrA-like family domain-containing oxidoreductase notA' (357 aa).

NADP(+) is bound by residues 13-18 (GATGAQ), 39-43 (RKPES), 60-61 (DG), 81-83 (TNS), Lys140, and 164-167 (YMDV).

Belongs to the NmrA-type oxidoreductase family.

In terms of biological role, nmrA-like family domain-containing oxidoreductase; part of the gene cluster that mediates the biosynthesis of notoamide, a fungal indole alkaloid that belongs to a family of natural products containing a characteristic bicyclo[2.2.2]diazaoctane core. The first step of notoamide biosynthesis involves coupling of L-proline and L-tryptophan by the bimodular NRPS notE', to produce cyclo-L-tryptophan-L-proline called brevianamide F. The reverse prenyltransferase notF' then acts as a deoxybrevianamide E synthase and converts brevianamide F to deoxybrevianamide E via reverse prenylation at C-2 of the indole ring leading to the bicyclo[2.2.2]diazaoctane core. Deoxybrevianamide E is further hydroxylated at C-6 of the indole ring, likely catalyzed by the cytochrome P450 monooxygenase notG', to yield 6-hydroxy-deoxybrevianamide E. 6-hydroxy-deoxybrevianamide E is a specific substrate of the prenyltransferase notC' for normal prenylation at C-7 to produce 6-hydroxy-7-prenyl-deoxybrevianamide, also called notoamide S. As the proposed pivotal branching point in notoamide biosynthesis, notoamide S can be diverted to notoamide E through an oxidative pyran ring closure putatively catalyzed by either notH' cytochrome P450 monooxygenase or the notD' FAD-linked oxidoreductase. This step would be followed by an indole 2,3-epoxidation-initiated pinacol-like rearrangement catalyzed by the notB' FAD-dependent monooxygenase leading to the formation of notoamide C and notoamide D. On the other hand notoamide S is converted to notoamide T by notH' (or notD'), a bifunctional oxidase that also functions as the intramolecular Diels-Alderase responsible for generation of (-)-notoamide T. To generate antipodal (+)-notoaminide T, notH (or notD) in Aspergillus strain MF297-2 is expected to catalyze a Diels-Alder reaction leading to the opposite stereochemistry. The remaining oxidoreductase notD' (or notH') likely catalyzes the oxidative pyran ring formation to yield (-)-stephacidin A. The FAD-dependent monooxygenase notI' is highly similar to notB' and is predicted to catalyze a similar conversion from (-)-stephacidin A to (+)-notoamide B via the 2,3-epoxidation of (-)-stephacidin A followed by a pinacol-type rearrangement. Finally, it remains unclear which enzyme could be responsible for the final hydroxylation steps leading to notoamide A and sclerotiamide. This chain is NmrA-like family domain-containing oxidoreductase notA', found in Aspergillus versicolor.